A 399-amino-acid chain; its full sequence is Phosphoglycerate kinase (399 aa).

Residues 22-24 (DFN), arginine 38, 61-64 (HLGR), arginine 120, and arginine 153 each bind substrate. ATP contacts are provided by residues lysine 206, glycine 297, glutamate 328, and 354-357 (GGDT).

The protein belongs to the phosphoglycerate kinase family. In terms of assembly, monomer.

The protein resides in the cytoplasm. The enzyme catalyses (2R)-3-phosphoglycerate + ATP = (2R)-3-phospho-glyceroyl phosphate + ADP. It functions in the pathway carbohydrate degradation; glycolysis; pyruvate from D-glyceraldehyde 3-phosphate: step 2/5. The protein is Phosphoglycerate kinase of Campylobacter concisus (strain 13826).